Consider the following 232-residue polypeptide: Large ribosomal subunit protein uL1 (232 aa).

It belongs to the universal ribosomal protein uL1 family. As to quaternary structure, part of the 50S ribosomal subunit.

Its function is as follows. Binds directly to 23S rRNA. The L1 stalk is quite mobile in the ribosome, and is involved in E site tRNA release. In terms of biological role, protein L1 is also a translational repressor protein, it controls the translation of the L11 operon by binding to its mRNA. In Coxiella burnetii (strain RSA 331 / Henzerling II), this protein is Large ribosomal subunit protein uL1.